The primary structure comprises 287 residues: Phosphatidylserine decarboxylase proenzyme (287 aa).

Active-site charge relay system; for autoendoproteolytic cleavage activity residues include Asp-89, His-146, and Ser-252. Ser-252 (schiff-base intermediate with substrate; via pyruvic acid; for decarboxylase activity) is an active-site residue. Pyruvic acid (Ser); by autocatalysis is present on Ser-252.

This sequence belongs to the phosphatidylserine decarboxylase family. PSD-B subfamily. Prokaryotic type I sub-subfamily. In terms of assembly, heterodimer of a large membrane-associated beta subunit and a small pyruvoyl-containing alpha subunit. The cofactor is pyruvate. Post-translationally, is synthesized initially as an inactive proenzyme. Formation of the active enzyme involves a self-maturation process in which the active site pyruvoyl group is generated from an internal serine residue via an autocatalytic post-translational modification. Two non-identical subunits are generated from the proenzyme in this reaction, and the pyruvate is formed at the N-terminus of the alpha chain, which is derived from the carboxyl end of the proenzyme. The autoendoproteolytic cleavage occurs by a canonical serine protease mechanism, in which the side chain hydroxyl group of the serine supplies its oxygen atom to form the C-terminus of the beta chain, while the remainder of the serine residue undergoes an oxidative deamination to produce ammonia and the pyruvoyl prosthetic group on the alpha chain. During this reaction, the Ser that is part of the protease active site of the proenzyme becomes the pyruvoyl prosthetic group, which constitutes an essential element of the active site of the mature decarboxylase.

The protein resides in the cell membrane. It catalyses the reaction a 1,2-diacyl-sn-glycero-3-phospho-L-serine + H(+) = a 1,2-diacyl-sn-glycero-3-phosphoethanolamine + CO2. It participates in phospholipid metabolism; phosphatidylethanolamine biosynthesis; phosphatidylethanolamine from CDP-diacylglycerol: step 2/2. In terms of biological role, catalyzes the formation of phosphatidylethanolamine (PtdEtn) from phosphatidylserine (PtdSer). The sequence is that of Phosphatidylserine decarboxylase proenzyme from Shewanella amazonensis (strain ATCC BAA-1098 / SB2B).